A 408-amino-acid polypeptide reads, in one-letter code: Peptidase T (408 aa).

Residue His-78 coordinates Zn(2+). Asp-80 is a catalytic residue. Residue Asp-140 coordinates Zn(2+). The active-site Proton acceptor is the Glu-173. Zn(2+) contacts are provided by Glu-174, Asp-196, and His-379.

Belongs to the peptidase M20B family. Zn(2+) is required as a cofactor.

The protein resides in the cytoplasm. It catalyses the reaction Release of the N-terminal residue from a tripeptide.. Functionally, cleaves the N-terminal amino acid of tripeptides. This is Peptidase T from Shigella boydii serotype 18 (strain CDC 3083-94 / BS512).